Consider the following 515-residue polypeptide: Maturase K (515 aa).

It belongs to the intron maturase 2 family. MatK subfamily.

The protein localises to the plastid. Its subcellular location is the chloroplast. Its function is as follows. Usually encoded in the trnK tRNA gene intron. Probably assists in splicing its own and other chloroplast group II introns. This Helonias bullata (Swamp pink) protein is Maturase K.